The chain runs to 173 residues: NADH-ubiquinone oxidoreductase chain 6 (173 aa).

A run of 5 helical transmembrane segments spans residues 1–21 (MTYLVLLLGLCFVLGGLAVAS), 27–47 (YGVVGLVLASVAGCGWLLSLG), 48–68 (VSFVSLVLFMVYLGGMLVVFV), 88–108 (VGYGASFILVVIAGMIVGGLI), and 139–159 (YGVGMFLVAGWGLLLTLFVVL).

It belongs to the complex I subunit 6 family.

It localises to the mitochondrion membrane. The catalysed reaction is a ubiquinone + NADH + 5 H(+)(in) = a ubiquinol + NAD(+) + 4 H(+)(out). Functionally, core subunit of the mitochondrial membrane respiratory chain NADH dehydrogenase (Complex I) that is believed to belong to the minimal assembly required for catalysis. Complex I functions in the transfer of electrons from NADH to the respiratory chain. The immediate electron acceptor for the enzyme is believed to be ubiquinone. This chain is NADH-ubiquinone oxidoreductase chain 6 (MT-ND6), found in Calidris maritima (Purple sandpiper).